Consider the following 120-residue polypeptide: Ribonuclease P protein component (120 aa).

Belongs to the RnpA family. Consists of a catalytic RNA component (M1 or rnpB) and a protein subunit.

It carries out the reaction Endonucleolytic cleavage of RNA, removing 5'-extranucleotides from tRNA precursor.. Functionally, RNaseP catalyzes the removal of the 5'-leader sequence from pre-tRNA to produce the mature 5'-terminus. It can also cleave other RNA substrates such as 4.5S RNA. The protein component plays an auxiliary but essential role in vivo by binding to the 5'-leader sequence and broadening the substrate specificity of the ribozyme. The protein is Ribonuclease P protein component of Rickettsia bellii (strain RML369-C).